The following is a 474-amino-acid chain: Synaptotagmin-17 (474 aa).

The segment at 60–112 (WLMASRSSDKDGDSVHTASEVPLTPRTNSPDGRRSSSDTSKSTYSLTRRISSL) is disordered. Residues 96 to 112 (SDTSKSTYSLTRRISSL) show a composition bias toward low complexity. S118 and S119 each carry phosphoserine. 2 consecutive C2 domains span residues 184–310 (QLGM…HWWK) and 321–455 (ELGE…EQWH).

The protein belongs to the synaptotagmin family. In terms of tissue distribution, expressed abundantly in brain (frontal and temporal lobes, hippocampus, hypothalamus, amygdala, substantia nigra, and pituitary), kidney, and prostate. Expressed in fetal brain, kidney and lung. Expressed in melanocytes.

The protein localises to the membrane. Its function is as follows. Plays a role in dendrite formation by melanocytes. The sequence is that of Synaptotagmin-17 (SYT17) from Homo sapiens (Human).